Reading from the N-terminus, the 253-residue chain is Trans-aconitate 2-methyltransferase (253 aa).

Belongs to the methyltransferase superfamily. Tam family.

The protein resides in the cytoplasm. The catalysed reaction is trans-aconitate + S-adenosyl-L-methionine = (E)-3-(methoxycarbonyl)pent-2-enedioate + S-adenosyl-L-homocysteine. Catalyzes the S-adenosylmethionine monomethyl esterification of trans-aconitate. This is Trans-aconitate 2-methyltransferase from Azoarcus sp. (strain BH72).